We begin with the raw amino-acid sequence, 1328 residues long: MGIPKFFRWMSERYPLCSQLIENDRIPEFDNLYLDMNGILHNCTHKNDDHSSPPLPEEEMYIAIFNYIEHLFEKIKPKKLLYMAVDGCAPRAKMNQQRSRRFRTAKDAHDARLKAERNGEDFPEEQFDSNCITPGTTFMERVSRQLYYFIHKKVTNDSQWQNIEVIFSGHDCPGEGEHKIMEYIRTQKAQPSYNPNTRHCLYGLDADLIMLGLLSHDPHFCLLREEVTFGPASRNRSKELAHQKFYLLHLSLLREYLEFEFQECRSTFTFKYDLEKILDDFILLAFFVGNDFLPHLPGLHINEGALALMFSIYKKVMPSAGGYINEKGVINMARLELILLELENFEKEIFKAEVSETKNNGNSDKPSFDFLKYITESTNDIKAMTGEQKNYFLQIKKFLSSREPFIDFSANISSVDQRFLRRLCNDLHLSFSKIIKVDGTHLLRITFRDLEFNDEDEDEIEQDEIERVLQKYDNIPLLNEEQALKEKNVEKDFIQWKDDYYRSKVGFSYYDEEALKAMAERYVEGLQWVLFYYYRGCQSWGWYYNYHFAPKISDVLKGLDVKIDFKMGTPFRPFEQLMAVLPARSQALVPPCFRDLMVNSESPIIDFYPENFALDQNGKTASWEAVVIIPFIDETRLIDALASKDKFLTEEERKRNSFNAPTVFSLAEDYTSFYPSSLPSLFPDLVTRCIQKPYSLPSMEGKEYLVGLCPGVFLGAFGMVGFPSFHTLKHKAELVYHGINVFGNESRNPSVIVNVEDVKSALTSEQIAMQYVGKRIFVDWPYLREAYVESAMDESYMYLASNSTIEKRDLAEIEKSQWGRKCSHKIREYSKRFGVLFGDISLLLQVRPIKGLEYTREGALVKIFNESVLEDYPAQLVVEKIAIDDPRFTEREAPPVEVEYPPGTKAFHLGEYNYGRPAQITGCKDNKLIIWLSTAPGLDAQWGRVLVNDSKSKEKYYPSYIVAKLLNIHPLLLSKITSSFLISNGTKRENIGLNLKFDARNQKVLGFSRKSTKGWEFSNKTVALVKEYINTFPQLFNILTTHATKDNLTVKDCFPKDDTQQLAAVKHWIKEKGINSLTRVSLDEDALDSDIIKLIEEKASTIDSTYQVPKKVFGVPRYALLKPSQTRGILHSQEFALGDRVVYVQDSGKVPIAAYGTVVGIMLHHLDVVFDLPFMSGTTLDGRCSPYHGMQVEVSMVLNVTNPQFVVNTRAGKNRKTNVSANNVSQGTDSRLVTKPTSTFPSPPSPPSSSVWNKREHHPKPFSLHQVPPPESLIHKSKSKFSKGNHHSTNGTQSIRGRGGKRGKPLRSKELNRKHDHIVQPMGKLQIN.

Residues 1211–1328 (AGKNRKTNVS…VQPMGKLQIN (118 aa)) are disordered. Polar residues predominate over residues 1217-1231 (TNVSANNVSQGTDSR). Over residues 1275–1286 (HKSKSKFSKGNH) the composition is skewed to basic residues.

This sequence belongs to the 5'-3' exonuclease family. Monomer. The cofactor is Mg(2+).

The protein localises to the cytoplasm. Its subcellular location is the perinuclear region. The protein resides in the P-body. With respect to regulation, strand exchange activity is enhanced by fatty acid synthase (stimulatory factor P190/210). Functionally, multifunctional protein that exhibits several independent functions at different levels of the cellular processes. 5'-3' exonuclease component of the nonsense-mediated mRNA decay (NMD) which is a highly conserved mRNA degradation pathway, an RNA surveillance system whose role is to identify and rid cells of mRNA with premature termination codons and thus prevents accumulation of potentially harmful truncated proteins. Involved in the degradation of several hypomodified mature tRNA species and participates in the 5'-processing or the degradation of the snoRNA precursors and rRNA processing. This chain is 5'-3' exoribonuclease 1 (exo2), found in Schizosaccharomyces pombe (strain 972 / ATCC 24843) (Fission yeast).